The primary structure comprises 414 residues: Secernin-1 (414 aa).

Position 2 is an N-acetylalanine (Ala2). Cys9 is an active-site residue.

The protein belongs to the peptidase C69 family. Secernin subfamily.

It is found in the cytoplasm. Regulates exocytosis in mast cells. Increases both the extent of secretion and the sensitivity of mast cells to stimulation with calcium. The polypeptide is Secernin-1 (SCRN1) (Bos taurus (Bovine)).